A 555-amino-acid polypeptide reads, in one-letter code: Chaperonin GroEL (555 aa).

Residues 29 to 32 (TLGP), Lys-50, 86 to 90 (DGTTT), Gly-418, and Asp-499 contribute to the ATP site. Positions 528 to 555 (HEEDNNTGNRSGGGVGGGHHGGMGGMDF) are disordered. The span at 537–555 (RSGGGVGGGHHGGMGGMDF) shows a compositional bias: gly residues.

Belongs to the chaperonin (HSP60) family. In terms of assembly, forms a cylinder of 14 subunits composed of two heptameric rings stacked back-to-back. Interacts with the co-chaperonin GroES.

It is found in the cytoplasm. The catalysed reaction is ATP + H2O + a folded polypeptide = ADP + phosphate + an unfolded polypeptide.. Its function is as follows. Together with its co-chaperonin GroES, plays an essential role in assisting protein folding. The GroEL-GroES system forms a nano-cage that allows encapsulation of the non-native substrate proteins and provides a physical environment optimized to promote and accelerate protein folding. The sequence is that of Chaperonin GroEL from Orientia tsutsugamushi (strain Ikeda) (Rickettsia tsutsugamushi).